The primary structure comprises 293 residues: Acetyl-coenzyme A carboxylase carboxyl transferase subunit beta (293 aa).

A CoA carboxyltransferase N-terminal domain is found at 29–293 (LWSKCPECGQ…GCKPMELTSA (265 aa)). Zn(2+) contacts are provided by C33, C36, C52, and C55. The segment at 33 to 55 (CPECGQVVYLKDLKLNASVCANC) adopts a C4-type zinc-finger fold.

It belongs to the AccD/PCCB family. As to quaternary structure, acetyl-CoA carboxylase is a heterohexamer composed of biotin carboxyl carrier protein (AccB), biotin carboxylase (AccC) and two subunits each of ACCase subunit alpha (AccA) and ACCase subunit beta (AccD). Requires Zn(2+) as cofactor.

It is found in the cytoplasm. The enzyme catalyses N(6)-carboxybiotinyl-L-lysyl-[protein] + acetyl-CoA = N(6)-biotinyl-L-lysyl-[protein] + malonyl-CoA. The protein operates within lipid metabolism; malonyl-CoA biosynthesis; malonyl-CoA from acetyl-CoA: step 1/1. Component of the acetyl coenzyme A carboxylase (ACC) complex. Biotin carboxylase (BC) catalyzes the carboxylation of biotin on its carrier protein (BCCP) and then the CO(2) group is transferred by the transcarboxylase to acetyl-CoA to form malonyl-CoA. The protein is Acetyl-coenzyme A carboxylase carboxyl transferase subunit beta of Synechococcus sp. (strain CC9605).